A 336-amino-acid polypeptide reads, in one-letter code: Phospho-N-acetylmuramoyl-pentapeptide-transferase (336 aa).

10 helical membrane passes run 3–23 (LTLIAAIISFMVSAFTMPYFI), 53–73 (GGTVFLLVATAVSLLVNLFSI), 78–98 (SLALISGILSIVVIYGIIGFL), 118–138 (LALQLAGGLMFYFLHVSPSGI), 143–163 (VFGYQLSLGIFYLFFVLFWVV), 174–194 (GIDGLASISVVISLVTYGVIA), 200–220 (FDVLLLIGTMIGALLGFFCFN), 226–246 (VFMGDVGSLALGAMLAAISIA), 251–271 (WTLLIIGIVYVLETSSVMLQV), and 316–336 (AFLWGVGSLASLLVLAILYVF).

This sequence belongs to the glycosyltransferase 4 family. MraY subfamily. Requires Mg(2+) as cofactor.

The protein resides in the cell membrane. The catalysed reaction is UDP-N-acetyl-alpha-D-muramoyl-L-alanyl-gamma-D-glutamyl-L-lysyl-D-alanyl-D-alanine + di-trans,octa-cis-undecaprenyl phosphate = Mur2Ac(oyl-L-Ala-gamma-D-Glu-L-Lys-D-Ala-D-Ala)-di-trans,octa-cis-undecaprenyl diphosphate + UMP. It participates in cell wall biogenesis; peptidoglycan biosynthesis. Functionally, catalyzes the initial step of the lipid cycle reactions in the biosynthesis of the cell wall peptidoglycan: transfers peptidoglycan precursor phospho-MurNAc-pentapeptide from UDP-MurNAc-pentapeptide onto the lipid carrier undecaprenyl phosphate, yielding undecaprenyl-pyrophosphoryl-MurNAc-pentapeptide, known as lipid I. The protein is Phospho-N-acetylmuramoyl-pentapeptide-transferase of Streptococcus pyogenes serotype M5 (strain Manfredo).